The following is a 1749-amino-acid chain: Kinesin-like protein KIF13A (1749 aa).

The region spanning 5–352 (KVKVAVRVRP…LRYADRAKRI (348 aa)) is the Kinesin motor domain. 102 to 109 (GQTGSGKS) provides a ligand contact to ATP. The stretch at 359–431 (NEDPNAKVIR…QERQRQLESM (73 aa)) forms a coiled coil. The FHA domain occupies 469 to 519 (HTRVGADTSQDIQLFGIGIQPEHCEIDIAADGDITLTPKENARSCVNGTLV). The stretch at 552–775 (LKDFERETSS…VPEAKRLYGK (224 aa)) forms a coiled coil. Disordered stretches follow at residues 633–652 (QQLS…LAYS) and 834–853 (IPER…SGSL). S636 is modified (phosphoserine). Positions 1086–1126 (SDALIKRREYLDEQIKKVSNKKEKTEDDMEREARLVEQWVG) form a coiled coil. Position 1274 is a phosphoserine (S1274). The span at 1370–1383 (LSTPNVHNVSSSRP) shows a compositional bias: polar residues. Disordered regions lie at residues 1370 to 1402 (LSTP…QLDV) and 1417 to 1436 (TLPR…ENPH). Residues 1421-1430 (DSPRRSKEGC) show a composition bias toward basic and acidic residues. Residues S1441, S1477, S1481, S1524, S1600, and S1650 each carry the phosphoserine modification. Positions 1475–1499 (LLSQEDSEEEENELEALSRKLMLTQ) form a coiled coil. 2 disordered regions span residues 1584–1665 (CAEP…GHQA) and 1698–1749 (DFDG…TATR). Residues 1719–1741 (ETDHKGIPERPPDADRLHPKIEN) show a composition bias toward basic and acidic residues.

It belongs to the TRAFAC class myosin-kinesin ATPase superfamily. Kinesin family. As to quaternary structure, interacts with AP1G1 and AP1G2. Interacts with ZFYVE26. Interacts with AP2B1.

The protein resides in the golgi apparatus membrane. It localises to the cytoplasm. It is found in the cytoskeleton. Its subcellular location is the microtubule organizing center. The protein localises to the centrosome. The protein resides in the midbody. It localises to the endosome membrane. Its function is as follows. Plus end-directed microtubule-dependent motor protein involved in intracellular transport and regulating various processes such as mannose-6-phosphate receptor (M6PR) transport to the plasma membrane, endosomal sorting during melanosome biogenesis and cytokinesis. During melanosome maturation, required for delivering melanogenic enzymes from recycling endosomes to nascent melanosomes by creating peripheral recycling endosomal subdomains in melanocytes. Also required for the abscission step in cytokinesis: mediates translocation of ZFYVE26, and possibly TTC19, to the midbody during cytokinesis. Mediates the transport of M6PR-containing vesicles from trans-Golgi network to the plasma membrane via direct interaction with the AP-1 complex. The sequence is that of Kinesin-like protein KIF13A (Kif13a) from Mus musculus (Mouse).